Reading from the N-terminus, the 147-residue chain is Sec-independent protein translocase protein TatB (147 aa).

A helical transmembrane segment spans residues 1 to 21; sequence MFDISFSEILVIAAVALIVIG. Residues 67 to 88 are compositionally biased toward basic and acidic residues; sequence EETGRSIENSVHTELDKFRETV. Residues 67–147 form a disordered region; it reads EETGRSIENS…GVNRERETAE (81 aa). A compositionally biased stretch (low complexity) spans 103 to 117; that stretch reads APAGESSPPQNSSPA.

It belongs to the TatB family. In terms of assembly, the Tat system comprises two distinct complexes: a TatABC complex, containing multiple copies of TatA, TatB and TatC subunits, and a separate TatA complex, containing only TatA subunits. Substrates initially bind to the TatABC complex, which probably triggers association of the separate TatA complex to form the active translocon.

The protein localises to the cell inner membrane. Functionally, part of the twin-arginine translocation (Tat) system that transports large folded proteins containing a characteristic twin-arginine motif in their signal peptide across membranes. Together with TatC, TatB is part of a receptor directly interacting with Tat signal peptides. TatB may form an oligomeric binding site that transiently accommodates folded Tat precursor proteins before their translocation. The protein is Sec-independent protein translocase protein TatB of Nitrosospira multiformis (strain ATCC 25196 / NCIMB 11849 / C 71).